The chain runs to 188 residues: Threonylcarbamoyl-AMP synthase (188 aa).

Residues 3-188 (QLSSTQVTPV…RSGLVLRNGQ (186 aa)) form the YrdC-like domain.

The protein belongs to the SUA5 family. TsaC subfamily.

It localises to the cytoplasm. It catalyses the reaction L-threonine + hydrogencarbonate + ATP = L-threonylcarbamoyladenylate + diphosphate + H2O. In terms of biological role, required for the formation of a threonylcarbamoyl group on adenosine at position 37 (t(6)A37) in tRNAs that read codons beginning with adenine. Catalyzes the conversion of L-threonine, HCO(3)(-)/CO(2) and ATP to give threonylcarbamoyl-AMP (TC-AMP) as the acyladenylate intermediate, with the release of diphosphate. The sequence is that of Threonylcarbamoyl-AMP synthase from Shewanella denitrificans (strain OS217 / ATCC BAA-1090 / DSM 15013).